The following is a 268-amino-acid chain: Undecaprenyl-diphosphatase 1 (268 aa).

Transmembrane regions (helical) follow at residues 5-25, 43-63, 81-101, 107-127, 185-205, 214-234, and 248-268; these read TIVE…IPVS, GKAF…SVYF, HFVI…ALAH, VLFE…VILL, AEFS…FDLF, ADLP…LFVV, and LFGW…MIWG.

It belongs to the UppP family.

The protein localises to the cell inner membrane. The catalysed reaction is di-trans,octa-cis-undecaprenyl diphosphate + H2O = di-trans,octa-cis-undecaprenyl phosphate + phosphate + H(+). Catalyzes the dephosphorylation of undecaprenyl diphosphate (UPP). Confers resistance to bacitracin. The polypeptide is Undecaprenyl-diphosphatase 1 (Mesorhizobium japonicum (strain LMG 29417 / CECT 9101 / MAFF 303099) (Mesorhizobium loti (strain MAFF 303099))).